We begin with the raw amino-acid sequence, 1615 residues long: MSSAVGPRGPRPPTVPPPMQELPDLSHLTEEERNIIMAVMDRQKEEEEKEEAMLKCVVRDMAKPAACKTPRNAESQPHQPPLNIFRCVCVPRKPSSEEGGPERDWRLHQQFESYKEQVRKIGEEARRYQGEHKDDAPTCGICHKTKFADGCGHLCSYCRTKFCARCGGRVSLRSNNEDKVVMWVCNLCRKQQEILTKSGAWFFGSGPQQPSQDGTLSDTATGAGSEVPREKKARLQERSRSQTPLSTAAVSSQDTATPGAPLHRNKGAEPSQQALGPEQKQASRSRSEPPRERKKAPGLSEQNGKGGQKSERKRVPKSVVQPGEGIADERERKERRETRRLEKGRSQDYSDRPEKRDNGRVAEDQKQRKEEEYQTRYRSDPNLARYPVKAPPEEQQMRMHARVSRARHERRHSDVALPHTEAAAAAPAEATAGKRAPATARVSPPESPRARAAAAQPPTEHGPPPPRPAPGPAEPPEPRVPEPLRKQGRLDPGSAVLLRKAKREKAESMLRNDSLSSDQSESVRPSPPKPHRPKRGGKRRQMSVSSSEEEGVSTPEYTSCEDVELESESVSEKGDLDYYWLDPATWHSRETSPISSHPVTWQPSKEGDRLIGRVILNKRTTMPKESGALLGLKVVGGKMTDLGRLGAFITKVKKGSLADVVGHLRAGDEVLEWNGKPLPGATNEEVYNIILESKSEPQVEIIVSRPIGDIPRIPESSHPPLESSSSSFESQKMERPSISVISPTSPGALKDAPQVLPGQLSVKLWYDKVGHQLIVNVLQATDLPPRVDGRPRNPYVKMYFLPDRSDKSKRRTKTVKKLLEPKWNQTFVYSHVHRRDFRERMLEITVWDQPRVQDEESEFLGEILIELETALLDDEPHWYKLQTHDESSLPLPQPSPFMPRRHIHGESSSKKLQRSQRISDSDISDYEVDDGIGVVPPVGYRASARESKATTLTVPEQQRTTHHRSRSVSPHRGDDQGRPRSRLPNVPLQRSLDEIHPTRRSRSPTRHHDASRSPADHRSRHVESQYSSEPDSELLMLPRAKRGRSAESLHMTSELQPSLDRARSASTNCLRPDTSLHSPERERHSRKSERCSIQKQSRKGTASDADRVLPPCLSRRGYATPRATDQPVVRGKYPTRSRSSEHSSVRTLCSMHHLAPGGSAPPSPLLLTRTHRQGSPTQSPPADTSFGSRRGRQLPQVPVRSGSIEQASLVVEERTRQMKVKVHRFKQTTGSGSSQELDHEQYSKYNIHKDQYRSCDNASAKSSDSDVSDVSAISRASSTSRLSSTSFMSEQSERPRGRISSFTPKMQGRRMGTSGRAIIKSTSVSGEIYTLERNDGSQSDTAVGTVGAGGKKRRSSLSAKVVAIVSRRSRSTSQLSQTESGHKKLKSTIQRSTETGMAAEMRKMVRQPSRESTDGSINSYSSEGNLIFPGVRVGPDSQFSDFLDGLGPAQLVGRQTLATPAMGDIQIGMEDKKGQLEVEVIRARSLTQKPGSKSTPAPYVKVYLLENGACIAKKKTRIARKTLDPLYQQSLVFDESPQGKVLQVIVWGDYGRMDHKCFMGVAQILLEELDLSSMVIGWYKLFPPSSLVDPTLAPLTRRASQSSLESSSGPPCIRS.

Positions 1–26 (MSSAVGPRGPRPPTVPPPMQELPDLS) are disordered. The span at 9 to 20 (GPRPPTVPPPMQ) shows a compositional bias: pro residues. The RabBD domain occupies 22–205 (LPDLSHLTEE…TKSGAWFFGS (184 aa)). An FYVE-type zinc finger spans residues 133–193 (KDDAPTCGIC…VCNLCRKQQE (61 aa)). C139, C142, C155, C158, C163, C166, C185, and C188 together coordinate Zn(2+). A disordered region spans residues 205 to 569 (SGPQQPSQDG…CEDVELESES (365 aa)). The segment covering 206 to 222 (GPQQPSQDGTLSDTATG) has biased composition (polar residues). A compositionally biased stretch (basic and acidic residues) spans 227-240 (VPREKKARLQERSR). The segment covering 241–256 (SQTPLSTAAVSSQDTA) has biased composition (polar residues). Residues 327–379 (ADERERKERRETRRLEKGRSQDYSDRPEKRDNGRVAEDQKQRKEEEYQTRYRS) show a composition bias toward basic and acidic residues. Basic residues predominate over residues 399–410 (MHARVSRARHER). Residues 421–459 (EAAAAAPAEATAGKRAPATARVSPPESPRARAAAAQPPT) show a composition bias toward low complexity. Positions 460 to 475 (EHGPPPPRPAPGPAEP) are enriched in pro residues. A compositionally biased stretch (basic and acidic residues) spans 476–489 (PEPRVPEPLRKQGR). A compositionally biased stretch (polar residues) spans 511–523 (RNDSLSSDQSESV). S514 is subject to Phosphoserine. Residues 529–541 (KPHRPKRGGKRRQ) are compositionally biased toward basic residues. Residues 559-569 (SCEDVELESES) show a composition bias toward acidic residues. At S592 the chain carries Phosphoserine. Residues 619-705 (RTTMPKESGA…EPQVEIIVSR (87 aa)) form the PDZ domain. Residues 712–746 (RIPESSHPPLESSSSSFESQKMERPSISVISPTSP) form a disordered region. Positions 714–730 (PESSHPPLESSSSSFES) are enriched in low complexity. Residues S742 and S745 each carry the phosphoserine modification. The 124-residue stretch at 756 to 879 (LPGQLSVKLW…ALLDDEPHWY (124 aa)) folds into the C2 1 domain. The interval 884 to 1201 (HDESSLPLPQ…RQLPQVPVRS (318 aa)) is disordered. S895 carries the post-translational modification Phosphoserine. The span at 949-958 (ATTLTVPEQQ) shows a compositional bias: polar residues. S991 is subject to Phosphoserine. Over residues 1006-1023 (RHHDASRSPADHRSRHVE) the composition is skewed to basic and acidic residues. Phosphoserine is present on S1045. Basic and acidic residues predominate over residues 1078-1092 (SPERERHSRKSERCS). Residues 1173–1187 (QGSPTQSPPADTSFG) are compositionally biased toward polar residues. S1175 is subject to Phosphoserine. T1177 carries the post-translational modification Phosphothreonine. Residues S1179, S1231, S1233, S1234, S1262, S1263, and S1265 each carry the phosphoserine modification. A disordered region spans residues 1256 to 1313 (DNASAKSSDSDVSDVSAISRASSTSRLSSTSFMSEQSERPRGRISSFTPKMQGRRMGT). Low complexity predominate over residues 1268–1289 (SDVSAISRASSTSRLSSTSFMS). S1339 carries the phosphoserine modification. A disordered region spans residues 1368-1397 (RSRSTSQLSQTESGHKKLKSTIQRSTETGM). Residues 1461-1579 (AMGDIQIGME…DLSSMVIGWY (119 aa)) enclose the C2 2 domain. A phosphoserine mark is found at S1600, S1603, S1606, and S1615.

In terms of assembly, interacts with RAB3C, RAB10, RAB26 and RAB37. Binds SNAP25, SYT1 and CACNA1B. Interaction with SYT1 is enhanced by calcium ions. Interaction with SNAP25 is weaker in the presence of calcium ions. Binds RAB3A, RAB3B and RAB3D that have been activated by GTP-binding. Binds UNC13A. Interacts with TSPOAP1 and RIMBP2. Interacts with PPFIA3 and PPFIA4. Interacts with ERC1. Post-translationally, phosphorylated by BRSK1. Highly expressed in hippocampus, brain cortex, cerebellum and olfactory bulb. Detected at lower levels in midbrain, hindbrain and spinal cord. Detected retina and in spinal cord motor neurons.

Its subcellular location is the cell membrane. The protein resides in the synapse. The protein localises to the presynaptic cell membrane. Its function is as follows. Rab effector involved in exocytosis. May act as scaffold protein that regulates neurotransmitter release at the active zone. Essential for maintaining normal probability of neurotransmitter release and for regulating release during short-term synaptic plasticity. Plays a role in dendrite formation by melanocytes. The sequence is that of Regulating synaptic membrane exocytosis protein 1 (Rims1) from Rattus norvegicus (Rat).